A 227-amino-acid chain; its full sequence is MKMVAPWTRFYSHSCCLCCHVRTGTILLGVWYLIINAVVLLILLSALADPNQYHFSGSELGGEFEFMDDANMCIAIAISLLMILICAMATYGAYKQHAAWIIPFFCYQIFDFALNTLVAITVLVYPNSIQEYIRQLPPSFPYRDDIMSVNPTCLVLIILLFIGILLTLKGYLISCVWSCYRYINGRNSSDVLVYVTSNDTTVLLPPYDDATAVPSTAKEPPPPYVSA.

The next 4 membrane-spanning stretches (helical) occupy residues 26-46 (ILLG…LLSA), 72-92 (MCIA…ATYG), 100-120 (WIIP…LVAI), and 153-173 (CLVL…GYLI). Residues 205–222 (PPYDDATAVPSTAKEPPP) are required for NEDD4 interaction.

The protein belongs to the LAPTM4/LAPTM5 transporter family. Homooligomer; upon reaching the lysosomes. Interacts with MCOLN1. Interacts with NEDD4; may play a role in the lysosomal sorting of LAPTM4B; enhances HGS association with NEDD4; mediates inhibition of EGFR degradation. Interacts with PIP5K1C; promotes SNX5 association with LAPTM4B; kinase activity of PIP5K1C is required; interaction is regulated by phosphatidylinositol 4,5-bisphosphate generated by PIP5K1C. Interacts with HGS; promotes HGS ubiquitination. Interacts with SNX5. Interacts with SLC3A2 and SLC7A5; recruits SLC3A2 and SLC7A5 to lysosomes to promote leucine uptake into these organelles and is required for mTORC1 activation. Interacts with LRRC32; decreases TGFB1 production in regulatory T cells. Interacts with BECN1; competes with EGFR for LAPTM4B binding; regulates EGFR activity. Interacts with EGFR; positively correlates with EGFR activation. Post-translationally, undergoes proteolytic cleavage following delivery to the lysosomes. Ubiquitinated by NEDD4.

It is found in the endomembrane system. The protein resides in the late endosome membrane. The protein localises to the cell membrane. Its subcellular location is the cell projection. It localises to the lysosome membrane. It is found in the endosome membrane. The protein resides in the endosome. The protein localises to the multivesicular body membrane. Its subcellular location is the multivesicular body lumen. Required for optimal lysosomal function. Blocks EGF-stimulated EGFR intraluminal sorting and degradation. Conversely by binding with the phosphatidylinositol 4,5-bisphosphate, regulates its PIP5K1C interaction, inhibits HGS ubiquitination and relieves LAPTM4B inhibition of EGFR degradation. Recruits SLC3A2 and SLC7A5 (the Leu transporter) to the lysosome, promoting entry of leucine and other essential amino acid (EAA) into the lysosome, stimulating activation of proton-transporting vacuolar (V)-ATPase protein pump (V-ATPase) and hence mTORC1 activation. Plays a role as negative regulator of TGFB1 production in regulatory T cells. Binds ceramide and facilitates its exit from late endosome in order to control cell death pathways. The sequence is that of Lysosomal-associated transmembrane protein 4B from Mus musculus (Mouse).